A 132-amino-acid chain; its full sequence is Cytochrome c' (132 aa).

Arg10, Gln11, Asp65, Cys122, Cys125, and His126 together coordinate heme c.

Binds 1 heme c group covalently per subunit.

In terms of biological role, cytochrome c' is the most widely occurring bacterial c-type cytochrome. Cytochromes c' are high-spin proteins and the heme has no sixth ligand. Their exact function is not known. This is Cytochrome c' from Halomonas halodenitrificans (strain ATCC 12084 / NCIMB 8669) (Paracoccus halodenitrificans).